We begin with the raw amino-acid sequence, 87 residues long: Type 3 secretion system needle filament protein (87 aa).

It belongs to the SctF family. The core secretion machinery of the T3SS is composed of approximately 20 different proteins, including cytoplasmic components, a base, an export apparatus and a needle. This subunit polymerizes and forms the helical needle filament. In Y.enterocolitica E40, the needles are composed of 139 (plus-minus 19) YscF/SctF subunits.

The protein resides in the secreted. It is found in the cell surface. With respect to regulation, the secretion and/or polymerization may be controlled by the type III secretion system regulator YopR. Component of the type III secretion system (T3SS), also called injectisome, which is used to inject bacterial effector proteins into eukaryotic host cells. YscF/SctF forms the external needle filament that protrudes from the bacterial surface. The needle is not sufficient by itself for the formation of a pore allowing translocation of the Yop effectors across the host cell membrane. The sequence is that of Type 3 secretion system needle filament protein from Yersinia enterocolitica.